A 470-amino-acid chain; its full sequence is Putative multidrug resistance protein MdtD (470 aa).

The Periplasmic segment spans residues 1–11 (MTEFPDNTRWQ). A helical transmembrane segment spans residues 12 to 32 (LWIVAFGFFMQSLDTTIVNTA). At 33 to 48 (LPSMAKSLGESPLHMH) the chain is on the cytoplasmic side. The helical transmembrane segment at 49–69 (MVVVSYVLTVAVMLPASGWLA) threads the bilayer. At 70-76 (DKIGVRN) the chain is on the periplasmic side. Residues 77-97 (IFFAAIVLFTLGSLFCALSGT) form a helical membrane-spanning segment. At 98–101 (LNQL) the chain is on the cytoplasmic side. The helical transmembrane segment at 102–124 (VLARVLQGVGGAMMVPVGRLTVM) threads the bilayer. Residues 125–137 (KIVPRAQYMAAMT) are Periplasmic-facing. The helical transmembrane segment at 138-158 (FVALPGQIGPLLGPALGGVLV) threads the bilayer. The Cytoplasmic portion of the chain corresponds to 159–164 (EYASWH). Residues 165–185 (WIFLINIPVGIVGAMATFMLM) traverse the membrane as a helical segment. Residues 186 to 196 (PNYTIETRRFD) are Periplasmic-facing. Residues 197 to 217 (LPGFLLLAIGMAVLTLALDGS) traverse the membrane as a helical segment. Residues 218–224 (KSMGISP) are Cytoplasmic-facing. The chain crosses the membrane as a helical span at residues 225-245 (WTLAGLAAGGAAAILLYLFHA). Over 246–262 (KKNSGALFSLRLFRTPT) the chain is Periplasmic. The helical transmembrane segment at 263–283 (FSLGLLGSFAGRIGSGMLPFM) threads the bilayer. At 284 to 285 (TP) the chain is on the cytoplasmic side. Residues 286-306 (VFLQIGLGFSPFHAGLMMIPM) form a helical membrane-spanning segment. Over 307-341 (VLGSMGMKRIVVQIVNRFGYRRVLVATTLGLALVS) the chain is Periplasmic. The chain crosses the membrane as a helical span at residues 342-362 (LLFMSVALLGWYYLLPLVLLL). The Cytoplasmic portion of the chain corresponds to 363–395 (QGMVNSARFSSMNTLTLKDLPDTLASSGNSLLS). A helical membrane pass occupies residues 396-416 (MIMQLSMSIGVTIAGMLLGMF). Residues 417-430 (GQQHIGIDSSATHH) lie on the Periplasmic side of the membrane. Residues 431 to 451 (VFMYTWLCMAVIIALPAIIFA) traverse the membrane as a helical segment. Over 452–470 (RVPNDTQQNMVISRRKRSL) the chain is Cytoplasmic.

This sequence belongs to the major facilitator superfamily. TCR/Tet family.

The protein resides in the cell inner membrane. The chain is Putative multidrug resistance protein MdtD from Salmonella typhi.